We begin with the raw amino-acid sequence, 252 residues long: NAD(P)H-quinone oxidoreductase subunit K (252 aa).

Positions 73, 74, 138, and 169 each coordinate [4Fe-4S] cluster. Residues 225-236 (ASTQKQALSPSQ) are compositionally biased toward polar residues. The disordered stretch occupies residues 225–252 (ASTQKQALSPSQEIPLEDQNEATKEIAQ).

The protein belongs to the complex I 20 kDa subunit family. As to quaternary structure, NDH-1 can be composed of about 15 different subunits; different subcomplexes with different compositions have been identified which probably have different functions. Requires [4Fe-4S] cluster as cofactor.

The protein localises to the cellular thylakoid membrane. The catalysed reaction is a plastoquinone + NADH + (n+1) H(+)(in) = a plastoquinol + NAD(+) + n H(+)(out). It carries out the reaction a plastoquinone + NADPH + (n+1) H(+)(in) = a plastoquinol + NADP(+) + n H(+)(out). NDH-1 shuttles electrons from an unknown electron donor, via FMN and iron-sulfur (Fe-S) centers, to quinones in the respiratory and/or the photosynthetic chain. The immediate electron acceptor for the enzyme in this species is believed to be plastoquinone. Couples the redox reaction to proton translocation, and thus conserves the redox energy in a proton gradient. Cyanobacterial NDH-1 also plays a role in inorganic carbon-concentration. This is NAD(P)H-quinone oxidoreductase subunit K from Prochlorococcus marinus (strain MIT 9211).